Consider the following 1030-residue polypeptide: F-box/WD repeat-containing protein 10 (1030 aa).

In terms of domain architecture, F-box spans 280–329 (RDFIRDLPLHLSKYILRMLDKHSLNRCIFVSQHWATLAQQVKVDQSMHSF). WD repeat units follow at residues 466-505 (GHAG…CVRI), 508-547 (GHQG…KTFK), 549-584 (KDPI…LQKT), 587-624 (GHEG…ERCL), and 626-667 (AFKH…KVIK). The tract at residues 709–773 (KNKVKKSKDK…LSSDDMETPV (65 aa)) is disordered. A compositionally biased stretch (basic and acidic residues) spans 716 to 733 (KDKEEEREETSLGDEHSR). The segment covering 734–749 (STIQGHSLKDSVSSKQ) has biased composition (polar residues). Residues 963–992 (FMLMTVKEEKEFAEAKMKEYEASVSTKEVD) adopt a coiled-coil conformation.

In terms of biological role, probable substrate-recognition component of a SCF (SKP1-CUL1-F-box protein)-type E3 ubiquitin ligase complex which mediates the ubiquitination and subsequent proteasomal degradation of target proteins. Overexpression is leading to degradation of CBX5 and CBX1. The chain is F-box/WD repeat-containing protein 10 (Fbxw10) from Mus musculus (Mouse).